The sequence spans 83 residues: Large ribosomal subunit protein bL31B (83 aa).

Belongs to the bacterial ribosomal protein bL31 family. Type B subfamily. As to quaternary structure, part of the 50S ribosomal subunit.

This is Large ribosomal subunit protein bL31B from Lacticaseibacillus casei (strain BL23) (Lactobacillus casei).